The sequence spans 239 residues: ISSGCGTTGALSCSSNAKGTCCFEAPGGLILQTQFWDTSPETGPTDSWTIHGLWPDNCDGSFSEDCDPSRDYTGISSLLTAQGASDTLQFMNQFWLNDPDDGSNEELWEHEWATHGTCYSTLQTSCLPEGSPKGAEAVAFFEQVVTLFKTLPTYEWLTNQGIKPSSSTTHTYSALTAALEAEAGVIPALNCDGSDLDEIYWYFHLRGSVIDGEFEPISAPEKGDCPSSGIKWLPKNNEK.

Disulfide bonds link cysteine 5–cysteine 22, cysteine 13–cysteine 58, cysteine 21–cysteine 126, cysteine 66–cysteine 118, and cysteine 191–cysteine 225. Catalysis depends on residues histidine 51, glutamate 111, and histidine 115.

It belongs to the RNase T2 family.

The catalysed reaction is a ribonucleotidyl-ribonucleotide-RNA + H2O = a 3'-end 3'-phospho-ribonucleotide-RNA + a 5'-end dephospho-ribonucleoside-RNA + H(+). This is a base non-specific and adenylic acid preferential ribonuclease. The polypeptide is Ribonuclease Le2 (Lentinula edodes (Shiitake mushroom)).